Consider the following 466-residue polypeptide: Neuropeptide Y receptor type 5 (466 aa).

Residues 1-63 (MEVKLEEHFN…YRGSVDDLQY (63 aa)) lie on the Extracellular side of the membrane. Residues asparagine 10, asparagine 17, asparagine 38, and asparagine 39 are each glycosylated (N-linked (GlcNAc...) asparagine). Residues 64-84 (FLIGLYTFVSLLGFMGNLLIL) form a helical membrane-spanning segment. At 85-98 (MAVMKKRNQKTTVN) the chain is on the cytoplasmic side. The helical transmembrane segment at 99 to 119 (FLIGNLAFSDILVVLFCSPFT) threads the bilayer. At 120 to 138 (LTSVLLDQWMFGKAMCHIM) the chain is on the extracellular side. Cysteines 135 and 219 form a disulfide. Residues 139–159 (PFLQCVSVLVSTLILISIAIV) traverse the membrane as a helical segment. Topologically, residues 160 to 177 (RYHMIKHPISNNLTANHG) are cytoplasmic. The chain crosses the membrane as a helical span at residues 178–198 (YFLIATVWTLGFAICSPLPVF). Topologically, residues 199–229 (HSLVELKETFGSALLSSKYLCVESWPSDSYR) are extracellular. Residues 230-250 (IAFTISLLLVQYILPLVCLTV) traverse the membrane as a helical segment. Topologically, residues 251–389 (SHTSVCRSIS…KKRSRSVFYR (139 aa)) are cytoplasmic. The tract at residues 323–346 (GPSQEKHLTVPENPGSVRSQLSPS) is disordered. Residues 390 to 410 (LTILILVFAVSWMPLHVFHVV) form a helical membrane-spanning segment. Residues 411–427 (TDFNDNLISNRHFKLVY) are Extracellular-facing. The chain crosses the membrane as a helical span at residues 428-448 (CICHLLGMMSCCLNPILYGFL). Residues 449 to 466 (NNGIKADLRALIHCLHMS) lie on the Cytoplasmic side of the membrane. A lipid anchor (S-palmitoyl cysteine) is attached at cysteine 462.

It belongs to the G-protein coupled receptor 1 family.

It localises to the cell membrane. Functionally, receptor for neuropeptide Y and peptide YY. The activity of this receptor is mediated by G proteins that inhibit adenylate cyclase activity. Seems to be associated with food intake. Could be involved in feeding disorders. This chain is Neuropeptide Y receptor type 5 (Npy5r), found in Mus musculus (Mouse).